The chain runs to 358 residues: 3-dehydroquinate synthase (358 aa).

NAD(+) is bound by residues 75–80 (SGEGSK), 109–113 (GVLGD), 133–134 (TT), Lys-146, and Lys-155. Positions 188, 245, and 262 each coordinate Zn(2+).

This sequence belongs to the sugar phosphate cyclases superfamily. Dehydroquinate synthase family. Requires Co(2+) as cofactor. It depends on Zn(2+) as a cofactor. NAD(+) is required as a cofactor.

The protein resides in the cytoplasm. It catalyses the reaction 7-phospho-2-dehydro-3-deoxy-D-arabino-heptonate = 3-dehydroquinate + phosphate. The protein operates within metabolic intermediate biosynthesis; chorismate biosynthesis; chorismate from D-erythrose 4-phosphate and phosphoenolpyruvate: step 2/7. In terms of biological role, catalyzes the conversion of 3-deoxy-D-arabino-heptulosonate 7-phosphate (DAHP) to dehydroquinate (DHQ). This chain is 3-dehydroquinate synthase, found in Methylacidiphilum infernorum (isolate V4) (Methylokorus infernorum (strain V4)).